The chain runs to 192 residues: Pyridoxal 5'-phosphate synthase subunit PdxT (192 aa).

An L-glutamine-binding site is contributed by 47 to 49; it reads GES. C79 acts as the Nucleophile in catalysis. L-glutamine contacts are provided by residues R106 and 134–135; that span reads IR. Residues H170 and E172 each act as charge relay system in the active site.

The protein belongs to the glutaminase PdxT/SNO family. In the presence of PdxS, forms a dodecamer of heterodimers. Only shows activity in the heterodimer.

The catalysed reaction is aldehydo-D-ribose 5-phosphate + D-glyceraldehyde 3-phosphate + L-glutamine = pyridoxal 5'-phosphate + L-glutamate + phosphate + 3 H2O + H(+). The enzyme catalyses L-glutamine + H2O = L-glutamate + NH4(+). It functions in the pathway cofactor biosynthesis; pyridoxal 5'-phosphate biosynthesis. Its function is as follows. Catalyzes the hydrolysis of glutamine to glutamate and ammonia as part of the biosynthesis of pyridoxal 5'-phosphate. The resulting ammonia molecule is channeled to the active site of PdxS. This chain is Pyridoxal 5'-phosphate synthase subunit PdxT, found in Anoxybacillus flavithermus (strain DSM 21510 / WK1).